The chain runs to 222 residues: Ras-related protein Rab-21 (222 aa).

At Ala2 the chain carries N-acetylalanine. Residues Gly26, Gly29, Lys30, Thr31, Ser32, Asn43, Asp44, His46, Thr48, and Thr49 each contribute to the GTP site. Thr31 contributes to the Mg(2+) binding site. The short motif at 41–54 (KFNDKHITTLQASF) is the Switch 1 element. The Mg(2+) site is built by Thr49 and Asp72. A Switch 2 motif is present at residues 74 to 92 (AGQERFHALGPIYYRDSNG). Gly75, Asn130, Lys131, Asp133, Ala161, and Lys162 together coordinate GTP. S-geranylgeranyl cysteine attachment occurs at residues Cys218 and Cys219. Cys219 bears the Cysteine methyl ester mark. The propeptide at 220 to 222 (SSG) is removed in mature form.

This sequence belongs to the small GTPase superfamily. Rab family. In terms of assembly, interacts with the cytoplasmic tail of integrins ITGA1, ITGA2, ITGA5, ITGA6, ITGA11 and ITGB1; this interaction is dependent upon its GDP/GTP cycle. Interacts with RABGEF1 (via VPS9 domain). Interacts with ANKRD27. Interacts with VAMP7. Interacts (in GTP-bound form) with VAMP8 in response to starvation; the interaction probably regulates VAMP8 endolysosomal trafficking. Interacts (active GTP-bound form) with TMED10; the interaction is indirect and regulates TMED10 abundance and localization at the Golgi. Requires Mg(2+) as cofactor.

The protein localises to the endoplasmic reticulum membrane. Its subcellular location is the golgi apparatus. The protein resides in the trans-Golgi network. It localises to the golgi apparatus membrane. It is found in the early endosome membrane. The protein localises to the cytoplasmic vesicle membrane. Its subcellular location is the cleavage furrow. The protein resides in the cell projection. It localises to the neuron projection. The enzyme catalyses GTP + H2O = GDP + phosphate + H(+). With respect to regulation, regulated by guanine nucleotide exchange factors (GEFs) including ANKRD27 and RABGEF1, which promote the exchange of bound GDP for free GTP. Regulated by GTPase activating proteins (GAPs) which increase the GTP hydrolysis activity. Inhibited by GDP dissociation inhibitors (GDIs). The small GTPases Rab are key regulators of intracellular membrane trafficking, from the formation of transport vesicles to their fusion with membranes. Rabs cycle between an inactive GDP-bound form and an active GTP-bound form that is able to recruit to membranes different sets of downstream effectors directly responsible for vesicle formation, movement, tethering and fusion. RAB21 is involved in membrane trafficking control. Regulates integrin internalization and recycling, but does not influence the traffic of endosomally translocated receptors in general. As a result, may regulate cell adhesion and migration. During the mitosis of adherent cells, controls the endosomal trafficking of integrins which is required for the successful completion of cytokinesis. Involved in neurite growth. Following SBF2/MTMT13-mediated activation in response to starvation-induced autophagy, binds to and regulates SNARE protein VAMP8 endolysosomal transport required for SNARE-mediated autophagosome-lysosome fusion. Modulates protein levels of the cargo receptors TMED2 and TMED10, and required for appropriate Golgi localization of TMED10. The polypeptide is Ras-related protein Rab-21 (Mus musculus (Mouse)).